The following is a 634-amino-acid chain: Probable beta-glucosidase C (634 aa).

Positions 1–19 (MRIDCTVASLTALASGCQA) are cleaved as a signal peptide. 4 N-linked (GlcNAc...) asparagine glycosylation sites follow: N90, N112, N219, and N270. The active site involves D337. 4 N-linked (GlcNAc...) asparagine glycosylation sites follow: N360, N476, N484, and N524.

The protein belongs to the glycosyl hydrolase 3 family.

It is found in the secreted. The enzyme catalyses Hydrolysis of terminal, non-reducing beta-D-glucosyl residues with release of beta-D-glucose.. It functions in the pathway glycan metabolism; cellulose degradation. Its function is as follows. Beta-glucosidases are one of a number of cellulolytic enzymes involved in the degradation of cellulosic biomass. Catalyzes the last step releasing glucose from the inhibitory cellobiose. The chain is Probable beta-glucosidase C (bglC) from Aspergillus flavus (strain ATCC 200026 / FGSC A1120 / IAM 13836 / NRRL 3357 / JCM 12722 / SRRC 167).